We begin with the raw amino-acid sequence, 479 residues long: Zinc finger and SCAN domain-containing protein 26 (479 aa).

Residue K17 forms a Glycyl lysine isopeptide (Lys-Gly) (interchain with G-Cter in SUMO2) linkage. The SCAN box domain occupies 51–133; that stretch reads CKRFRQLRYE…VFLEDLQLEL (83 aa). Residues 155–187 are disordered; the sequence is TAPGKATPERQVQPEGDVPQPEREKGEAKRIEN. The segment covering 174 to 187 has biased composition (basic and acidic residues); the sequence is QPEREKGEAKRIEN. Residues 232 to 254 form a C2H2-type 1; degenerate zinc finger; the sequence is CKCSEYGQAFFQHSDLIKHESSH. 7 consecutive C2H2-type zinc fingers follow at residues 283 to 305, 311 to 333, 339 to 361, 367 to 389, 395 to 417, 423 to 445, and 451 to 473; these read HQCH…QKIH, YQCK…LRIH, YLCI…QRIH, CQCK…QRIH, HQCN…HRIH, FKCT…VRIH, and YKCN…QRYH.

Its subcellular location is the nucleus. May be involved in transcriptional regulation. The chain is Zinc finger and SCAN domain-containing protein 26 (ZSCAN26) from Bos taurus (Bovine).